The primary structure comprises 638 residues: MWPQARLPPHPAMAEETRQSKLAAAKRKLKEYWQRNSPGVPAGAKRNRKTNGSIHETATSGGCHSPGDSATGIHGESPTSSATLKDLESPCQELAVVPDSRSVKVSQLKNTIKSLKQQKKQVVHQLEEEKKANNEKQKAERELEVQIQRLNIQKGKLNTDLYHTKRSLRYFEEESKDLAVRLQHSLQRKGELERALSAVTATQKKKAERQFSSRSKARTEWKLEQSMREQALLKAQLTQLKESLKEVQLERDEYAEHLKGERARWQQRMRKMSQEVCSLKKEKKHDKYRVETLERSLSKLKNQMAEPLPPEPPAVPSEAELQHLRKELERVAGALQAQVEYNQRISLLNEGQKERLREQQERLPEQEERLQQLAEPQNSFKELNNENKSVLQLEQQVKELQEKLGKERLEAASQQKQQLTAQLSLMALPGEGDGGGHLDSEGEEAPRPIPSIPQDLESREAMSSFMDHLEEKADLSELVKKQELRFIQYWQERCHQKIHHLLSEPGGRAKDAALGGGHHQAGAQGGDEDEAAGAAADGIAAYSNYNNGHRKFLAAAHNPADEPGPGAPAPQELGAADKHGDLCEVSLTSSAQGEAREDPLLDKPTAQPIVQDHQEHPGLGNNCCVPFFCWAWLPRRRR.

Pro residues predominate over residues Met1–Pro11. Residues Met1–Leu84 form a disordered region. The segment covering Thr50–Gly62 has biased composition (polar residues). Coiled coils occupy residues Val105–Asp160, Leu223–Glu275, and Glu318–Gln417. Disordered regions lie at residues Ala427–Pro453, Lys510–Ala532, and Ala556–Ala575. A compositionally biased stretch (basic and acidic residues) spans Gly434–Pro446. Over residues Leu514–Gly525 the composition is skewed to gly residues. A compositionally biased stretch (low complexity) spans Asp561–Gly574.

This sequence belongs to the GOLGA8 family.

This chain is Golgin subfamily A member 8S, found in Homo sapiens (Human).